Here is a 504-residue protein sequence, read N- to C-terminus: Acetylcholine receptor subunit epsilon (504 aa).

Positions 1 to 19 are cleaved as a signal peptide; that stretch reads MESGVRILSLLILLHNSLA. Residues 20–240 are Extracellular-facing; the sequence is SESEESRLIK…IVFNLIIQRK (221 aa). 2 N-linked (GlcNAc...) asparagine glycosylation sites follow: asparagine 88 and asparagine 161. Cysteine 148 and cysteine 162 are disulfide-bonded. Residues 241 to 265 traverse the membrane as a helical segment; that stretch reads PLFYIINIIVPCVLISFLVVLVYFL. Topologically, residues 266 to 273 are cytoplasmic; sequence PAKAGGQK. The chain crosses the membrane as a helical span at residues 274–292; it reads CTVSISVLLAQTVFLFLIA. At 293-307 the chain is on the extracellular side; sequence QMVPETSLSVPLIGK. Residues 308-329 traverse the membrane as a helical segment; it reads YLMFVMFVSTLIVLSCVIVLNV. The Cytoplasmic portion of the chain corresponds to 330 to 473; sequence SLRSPSTHNL…WILIGKVLDV (144 aa). Residues 474-497 form a helical membrane-spanning segment; it reads LCFWVALPLFVLGTLAIFLMGHFN. Residues 498 to 504 lie on the Extracellular side of the membrane; that stretch reads TAPEHPF.

It belongs to the ligand-gated ion channel (TC 1.A.9) family. Acetylcholine receptor (TC 1.A.9.1) subfamily. Epsilon/CHRNE sub-subfamily. Pentamer of two alpha chains, and one each of the beta, delta, and gamma (in immature muscle) or epsilon (in mature muscle) chains.

It is found in the postsynaptic cell membrane. Its subcellular location is the cell membrane. The catalysed reaction is K(+)(in) = K(+)(out). The enzyme catalyses Na(+)(in) = Na(+)(out). In terms of biological role, after binding acetylcholine, the AChR responds by an extensive change in conformation that affects all subunits and leads to opening of an ion-conducting channel across the plasma membrane. The polypeptide is Acetylcholine receptor subunit epsilon (chrne) (Xenopus laevis (African clawed frog)).